The sequence spans 160 residues: Lipoprotein signal peptidase (160 aa).

2 helical membrane passes run 59–79 and 84–104; these read PEGI…YVWI and SPLF…NLID. Residues D113 and D139 contribute to the active site. A helical transmembrane segment spans residues 132–152; sequence WPIFNIADACITIGACLLFFF.

This sequence belongs to the peptidase A8 family.

Its subcellular location is the cell inner membrane. The catalysed reaction is Release of signal peptides from bacterial membrane prolipoproteins. Hydrolyzes -Xaa-Yaa-Zaa-|-(S,diacylglyceryl)Cys-, in which Xaa is hydrophobic (preferably Leu), and Yaa (Ala or Ser) and Zaa (Gly or Ala) have small, neutral side chains.. It functions in the pathway protein modification; lipoprotein biosynthesis (signal peptide cleavage). Its function is as follows. This protein specifically catalyzes the removal of signal peptides from prolipoproteins. The protein is Lipoprotein signal peptidase of Chlorobaculum parvum (strain DSM 263 / NCIMB 8327) (Chlorobium vibrioforme subsp. thiosulfatophilum).